Consider the following 282-residue polypeptide: Hepatitis A virus cellular receptor 2 homolog (282 aa).

The N-terminal stretch at 1–21 (MFSWLPFSCALLLLQPLPARS) is a signal peptide. The Ig-like V-type domain maps to 22-131 (LENAYTAEVG…EKLELKLSIT (110 aa)). At 22–194 (LENAYTAEVG…KDSGETIRTA (173 aa)) the chain is on the extracellular side. Intrachain disulfides connect Cys-38/Cys-111, Cys-52/Cys-63, and Cys-58/Cys-110. Gln-62 is a binding site for a 1,2-diacyl-sn-glycero-3-phospho-L-serine. N-linked (GlcNAc...) asparagine glycans are attached at residues Asn-74 and Asn-100. Position 112 (Arg-112) interacts with a 1,2-diacyl-sn-glycero-3-phospho-L-serine. Residues Phe-115 and Gly-117 each contribute to the Ca(2+) site. Position 119 (Met-119) interacts with a 1,2-diacyl-sn-glycero-3-phospho-L-serine. Residue Asn-120 participates in Ca(2+) binding. The interval 138 to 163 (PAGTAHGDSTTASPRTLTTEGSGSET) is disordered. Residues 144–163 (GDSTTASPRTLTTEGSGSET) are compositionally biased toward polar residues. O-linked (GalNAc...) threonine glycosylation is present at Thr-147. Asn-173 carries an N-linked (GlcNAc...) asparagine glycan. The chain crosses the membrane as a helical span at residues 195–215 (VHIGVGVSAGLALALILGVLI). The Cytoplasmic segment spans residues 216–282 (LKWYSSKKKK…YCYVSSQQPS (67 aa)). The segment at 253–271 (EENIYTIEENIYEMENSNE) is interaction with BAG6. Position 257 is a phosphotyrosine; by ITK (Tyr-257).

This sequence belongs to the immunoglobulin superfamily. TIM family. In terms of assembly, interacts with HMGB1; impairs HMGB1 binding to B-DNA and likely HMGB1-mediated innate immune response. Interacts with BAG6. Interacts (phosphorylated) with PIK3R1 and PIK3R2. Interacts (not dependent on its phosphorylation status) with FYN. Interacts (in basal state T-cells) with VAV1; AKT1/2, LCP2, ZAP70, SYK, PIK3R1, FYN, SH3BP2 and SH2D2A. Interacts (in activated T-cells) with LCK and PLCG. Interacts with ILF3; this interaction promotes ILF3 ubiquitination and degradation.

The protein localises to the membrane. It localises to the cell junction. Functionally, cell surface receptor implicated in modulating innate and adaptive immune responses. Generally accepted to have an inhibiting function. Reports on stimulating functions suggest that the activity may be influenced by the cellular context and/or the respective ligand. Regulates macrophage activation. Inhibits T-helper type 1 lymphocyte (Th1)-mediated auto- and alloimmune responses and promotes immunological tolerance. In CD8+ cells attenuates TCR-induced signaling, specifically by blocking NF-kappaB and NFAT promoter activities resulting in the loss of IL-2 secretion. The function may implicate its association with LCK proposed to impair phosphorylation of TCR subunits. In contrast, shown to activate TCR-induced signaling in T-cells probably implicating ZAP70, LCP2, LCK and FYN. Expressed on Treg cells can inhibit Th17 cell responses. Receptor for LGALS9. Binding to LGALS9 is believed to result in suppression of T-cell responses; the resulting apoptosis of antigen-specific cells may implicate HAVCR2 phosphorylation and disruption of its association with BAG6. Binding to LGALS9 is proposed to be involved in innate immune response to intracellular pathogens. Expressed on Th1 cells interacts with LGALS9 expressed on Mycobacterium tuberculosis-infected macrophages to stimulate antibactericidal activity including IL-1 beta secretion and to restrict intracellular bacterial growth. However, the function as receptor for LGALS9 has been challenged. Also reported to enhance CD8+ T cell responses to an acute infection such as by Listeria monocytogenes. Receptor for phosphatidylserine (PtSer); PtSer-binding is calcium-dependent. May recognize PtSer on apoptotic cells leading to their phagocytosis. Mediates the engulfment of apoptotic cells by dendritic cells. Expressed on T-cells, promotes conjugation but not engulfment of apoptotic cells. Expressed on dendritic cells (DCs) positively regulates innate immune response and in synergy with Toll-like receptors promotes secretion of TNF-alpha. In tumor-imfiltrating DCs suppresses nucleic acid-mediated innate immune repsonse by interaction with HMGB1 and interfering with nucleic acid-sensing and trafficking of nucleid acids to endosomes. Can enhance mast cell production of Th2 cytokines Il-4, IL-6 and IL-13. Expressed on natural killer (NK) cells acts as a coreceptor to enhance IFN-gamma production in response to LGALS9. In contrast, shown to suppress NK cell-mediated cytotoxicity. Negatively regulates NK cell function in LPS-induced endotoxic shock. The protein is Hepatitis A virus cellular receptor 2 homolog (Havcr2) of Rattus norvegicus (Rat).